The chain runs to 134 residues: Profilin-2 (134 aa).

Cysteine 13 and cysteine 118 form a disulfide bridge. Positions 84 to 100 (AVIRGKKGSGGITIKKT) match the Involved in PIP2 interaction motif. Position 114 is a phosphothreonine (threonine 114).

Belongs to the profilin family. As to quaternary structure, occurs in many kinds of cells as a complex with monomeric actin in a 1:1 ratio. Phosphorylated by MAP kinases.

The protein localises to the cytoplasm. It localises to the cytoskeleton. In terms of biological role, binds to actin and affects the structure of the cytoskeleton. At high concentrations, profilin prevents the polymerization of actin, whereas it enhances it at low concentrations. In Olea europaea (Common olive), this protein is Profilin-2.